The chain runs to 193 residues: dCTP deaminase (193 aa).

Residues 110–115 (RSSLAR), Asp-128, 136–138 (VLE), Tyr-171, Lys-178, and Gln-182 each bind dCTP. Glu-138 acts as the Proton donor/acceptor in catalysis.

This sequence belongs to the dCTP deaminase family. In terms of assembly, homotrimer.

The enzyme catalyses dCTP + H2O + H(+) = dUTP + NH4(+). It participates in pyrimidine metabolism; dUMP biosynthesis; dUMP from dCTP (dUTP route): step 1/2. Catalyzes the deamination of dCTP to dUTP. The protein is dCTP deaminase of Buchnera aphidicola subsp. Schizaphis graminum (strain Sg).